Here is a 450-residue protein sequence, read N- to C-terminus: Probable glycylpeptide N-tetradecanoyltransferase (450 aa).

Residues 1–28 form a disordered region; sequence MSHGHSHDGAPCGGHHGDDGAGGSRPSV. Tetradecanoyl-CoA is bound by residues Gln67, Phe68, Trp69, Phe200, Leu201, Cys202, Val203, Ser209, Arg211, Val212, and Ala213.

This sequence belongs to the NMT family.

It localises to the cytoplasm. The catalysed reaction is N-terminal glycyl-[protein] + tetradecanoyl-CoA = N-tetradecanoylglycyl-[protein] + CoA + H(+). Its function is as follows. Adds a myristoyl group to the N-terminal glycine residue of certain cellular proteins. This Caenorhabditis elegans protein is Probable glycylpeptide N-tetradecanoyltransferase (nmt-1).